A 216-amino-acid polypeptide reads, in one-letter code: uncharacterized protein (216 aa).

An N-acetyltransferase domain is found at Met-1–Lys-216.

The protein belongs to the acetyltransferase family.

This is an uncharacterized protein from Dictyostelium discoideum (Social amoeba).